Here is a 478-residue protein sequence, read N- to C-terminus: tRNA-2-methylthio-N(6)-dimethylallyladenosine synthase (478 aa).

An MTTase N-terminal domain is found at 39-157 (KLVFTQTFGC…FPQLLTESIN (119 aa)). 6 residues coordinate [4Fe-4S] cluster: Cys-48, Cys-84, Cys-118, Cys-194, Cys-198, and Cys-201. In terms of domain architecture, Radical SAM core spans 180–410 (RKFELKAFVN…LEAVNRISAE (231 aa)). A TRAM domain is found at 410–477 (EINDGYKDRI…TFSLNGILVN (68 aa)).

It belongs to the methylthiotransferase family. MiaB subfamily. In terms of assembly, monomer. It depends on [4Fe-4S] cluster as a cofactor.

It localises to the cytoplasm. It carries out the reaction N(6)-dimethylallyladenosine(37) in tRNA + (sulfur carrier)-SH + AH2 + 2 S-adenosyl-L-methionine = 2-methylsulfanyl-N(6)-dimethylallyladenosine(37) in tRNA + (sulfur carrier)-H + 5'-deoxyadenosine + L-methionine + A + S-adenosyl-L-homocysteine + 2 H(+). In terms of biological role, catalyzes the methylthiolation of N6-(dimethylallyl)adenosine (i(6)A), leading to the formation of 2-methylthio-N6-(dimethylallyl)adenosine (ms(2)i(6)A) at position 37 in tRNAs that read codons beginning with uridine. The polypeptide is tRNA-2-methylthio-N(6)-dimethylallyladenosine synthase (Clostridioides difficile (strain 630) (Peptoclostridium difficile)).